The sequence spans 706 residues: Ribosomal RNA large subunit methyltransferase K/L (706 aa).

In terms of domain architecture, THUMP spans 43–154 (LLYQSLLWSR…RDMASVALDL (112 aa)).

The protein belongs to the methyltransferase superfamily. RlmKL family.

It is found in the cytoplasm. It carries out the reaction guanosine(2445) in 23S rRNA + S-adenosyl-L-methionine = N(2)-methylguanosine(2445) in 23S rRNA + S-adenosyl-L-homocysteine + H(+). It catalyses the reaction guanosine(2069) in 23S rRNA + S-adenosyl-L-methionine = N(2)-methylguanosine(2069) in 23S rRNA + S-adenosyl-L-homocysteine + H(+). In terms of biological role, specifically methylates the guanine in position 2445 (m2G2445) and the guanine in position 2069 (m7G2069) of 23S rRNA. The sequence is that of Ribosomal RNA large subunit methyltransferase K/L from Serratia proteamaculans (strain 568).